A 553-amino-acid chain; its full sequence is ATP synthase F(1) complex subunit alpha, mitochondrial (553 aa).

Residues 1 to 43 (MLSVRVAAAVVRALPRRAGLVSRNALGSSFIAARNFHASNTHL) constitute a mitochondrion transit peptide. A phosphoserine mark is found at Ser-53 and Ser-65. A Phosphoserine; alternate modification is found at Ser-76. Ser-76 carries O-linked (GlcNAc) serine; alternate glycosylation. Ser-106 carries the post-translational modification Phosphoserine. Residues Lys-123, Lys-126, and Lys-132 each carry the N6-acetyllysine modification. Thr-134 carries the phosphothreonine modification. N6-acetyllysine; alternate is present on Lys-161. An N6-succinyllysine; alternate modification is found at Lys-161. Residue Ser-166 is modified to Phosphoserine. An N6-acetyllysine; alternate modification is found at Lys-167. At Lys-167 the chain carries N6-succinyllysine; alternate. Position 184 is a phosphoserine (Ser-184). Arg-204 carries the omega-N-methylarginine modification. Residues Gln-215, Gly-217, Lys-218, Thr-219, and Ser-220 each contribute to the ATP site. Thr-219 is a binding site for Mg(2+). Residues Lys-230 and Lys-239 each carry the N6-acetyllysine; alternate modification. Lys-230 and Lys-239 each carry N6-succinyllysine; alternate. Lys-240 carries the N6-acetyllysine modification. N6-acetyllysine; alternate occurs at positions 261 and 305. 2 positions are modified to N6-succinyllysine; alternate: Lys-261 and Lys-305. Position 312 (Asp-312) interacts with Mg(2+). An N6-acetyllysine; alternate modification is found at Lys-427. The residue at position 427 (Lys-427) is an N6-succinyllysine; alternate. Residue Lys-434 is modified to N6-acetyllysine. 2 residues coordinate ATP: Gln-473 and Gln-475. Residues Lys-498, Lys-506, Lys-531, and Lys-539 each carry the N6-acetyllysine; alternate modification. Residues Lys-498, Lys-506, Lys-531, and Lys-539 each carry the N6-succinyllysine; alternate modification. An N6-acetyllysine modification is found at Lys-541.

This sequence belongs to the ATPase alpha/beta chains family. In terms of assembly, homotrimer. Component of the ATP synthase complex composed at least of ATP5F1A/subunit alpha, ATP5F1B/subunit beta, ATP5MC1/subunit c (homooctomer), MT-ATP6/subunit a, MT-ATP8/subunit 8, ATP5ME/subunit e, ATP5MF/subunit f, ATP5MG/subunit g, ATP5MK/subunit k, ATP5MJ/subunit j, ATP5F1C/subunit gamma, ATP5F1D/subunit delta, ATP5F1E/subunit epsilon, ATP5PF/subunit F6, ATP5PB/subunit b, ATP5PD/subunit d, ATP5PO/subunit OSCP. ATP synthase complex consists of a soluble F(1) head domain (subunits alpha(3) and beta(3)) - the catalytic core - and a membrane F(0) domain - the membrane proton channel (subunits c, a, 8, e, f, g, k and j). These two domains are linked by a central stalk (subunits gamma, delta, and epsilon) rotating inside the F1 region and a stationary peripheral stalk (subunits F6, b, d, and OSCP). Interacts with ATPAF2. Interacts with HRG; the interaction occurs on the surface of T-cells and alters the cell morphology when associated with concanavalin (in vitro). Interacts with PLG (angiostatin peptide); the interaction inhibits most of the angiogenic properties of angiostatin. Interacts with BLOC1S1. Interacts with BCL2L1 isoform BCL-X(L); the interaction mediates the association of BCL2L1 isoform BCL-X(L) with the mitochondrial membrane F(1)F(0) ATP synthase and enhances neurons metabolic efficiency. Interacts with CLN5 and PPT1. Interacts with S100A1; this interaction increases F1-ATPase activity. Interacts with ABCB7; this interaction allows the regulation of cellular iron homeostasis and cellular reactive oxygen species (ROS) levels in cardiomyocytes. Post-translationally, acetylated on lysine residues. BLOC1S1 is required for acetylation.

It localises to the mitochondrion inner membrane. The protein localises to the cell membrane. Functionally, subunit alpha, of the mitochondrial membrane ATP synthase complex (F(1)F(0) ATP synthase or Complex V) that produces ATP from ADP in the presence of a proton gradient across the membrane which is generated by electron transport complexes of the respiratory chain. ATP synthase complex consist of a soluble F(1) head domain - the catalytic core - and a membrane F(1) domain - the membrane proton channel. These two domains are linked by a central stalk rotating inside the F(1) region and a stationary peripheral stalk. During catalysis, ATP synthesis in the catalytic domain of F(1) is coupled via a rotary mechanism of the central stalk subunits to proton translocation. In vivo, can only synthesize ATP although its ATP hydrolase activity can be activated artificially in vitro. With the catalytic subunit beta (ATP5F1B), forms the catalytic core in the F(1) domain. Subunit alpha does not bear the catalytic high-affinity ATP-binding sites. The protein is ATP synthase F(1) complex subunit alpha, mitochondrial of Pongo abelii (Sumatran orangutan).